A 272-amino-acid polypeptide reads, in one-letter code: Eukaryotic translation initiation factor 4E homolog (272 aa).

Residues 249-272 (GKLNSGRKPSNTRGGFSSFGNKRY) form a disordered region. The span at 255–272 (RKPSNTRGGFSSFGNKRY) shows a compositional bias: polar residues.

It belongs to the eukaryotic initiation factor 4E family.

Recognizes and binds the 7-methylguanosine-containing mRNA cap during an early step in the initiation of protein synthesis and facilitates ribosome binding by inducing the unwinding of the mRNAs secondary structures. The sequence is that of Eukaryotic translation initiation factor 4E homolog from Acanthamoeba polyphaga mimivirus (APMV).